A 258-amino-acid polypeptide reads, in one-letter code: 4,5-dihydroxyphthalate decarboxylase (258 aa).

It to P.testosteroni DHP decarboxylase.

It catalyses the reaction 4,5-dihydroxyphthalate + H(+) = 3,4-dihydroxybenzoate + CO2. It functions in the pathway xenobiotic degradation; phthalate degradation; 3,4-dihydroxybenzoate from phthalate: step 3/3. The polypeptide is 4,5-dihydroxyphthalate decarboxylase (pht5) (Pseudomonas putida (Arthrobacter siderocapsulatus)).